The chain runs to 88 residues: UPF0335 protein WD_0557 (88 aa).

It belongs to the UPF0335 family.

This Wolbachia pipientis wMel protein is UPF0335 protein WD_0557.